The primary structure comprises 319 residues: Ribonucleoside-diphosphate reductase small chain (319 aa).

Fe cation-binding residues include D70, E101, and H104. Residue Y108 is part of the active site. 3 residues coordinate Fe cation: E163, E197, and H200. Residues 313–319 (FSLDVDF) form an interaction with R1 region.

The protein belongs to the ribonucleoside diphosphate reductase small chain family. Interacts with RNR1/OPG080 subunit. Can interact with host RNR1 supunit. Fe cation is required as a cofactor.

It carries out the reaction a 2'-deoxyribonucleoside 5'-diphosphate + [thioredoxin]-disulfide + H2O = a ribonucleoside 5'-diphosphate + [thioredoxin]-dithiol. Its function is as follows. Ribonucleoside-diphosphate reductase holoenzyme provides the precursors necessary for viral DNA synthesis. Allows virus growth in non-dividing cells. Catalyzes the biosynthesis of deoxyribonucleotides from the corresponding ribonucleotides. The protein is Ribonucleoside-diphosphate reductase small chain (OPG048) of Vaccinia virus (strain L-IVP) (VACV).